The following is a 283-amino-acid chain: ATP synthase gamma chain (283 aa).

Belongs to the ATPase gamma chain family. F-type ATPases have 2 components, CF(1) - the catalytic core - and CF(0) - the membrane proton channel. CF(1) has five subunits: alpha(3), beta(3), gamma(1), delta(1), epsilon(1). CF(0) has three main subunits: a, b and c.

The protein localises to the cell membrane. Its function is as follows. Produces ATP from ADP in the presence of a proton gradient across the membrane. The gamma chain is believed to be important in regulating ATPase activity and the flow of protons through the CF(0) complex. This is ATP synthase gamma chain from Clostridium perfringens (strain ATCC 13124 / DSM 756 / JCM 1290 / NCIMB 6125 / NCTC 8237 / Type A).